A 255-amino-acid chain; its full sequence is Pyrroloquinoline-quinone synthase (255 aa).

It belongs to the PqqC family.

The catalysed reaction is 6-(2-amino-2-carboxyethyl)-7,8-dioxo-1,2,3,4,7,8-hexahydroquinoline-2,4-dicarboxylate + 3 O2 = pyrroloquinoline quinone + 2 H2O2 + 2 H2O + H(+). It participates in cofactor biosynthesis; pyrroloquinoline quinone biosynthesis. Its function is as follows. Ring cyclization and eight-electron oxidation of 3a-(2-amino-2-carboxyethyl)-4,5-dioxo-4,5,6,7,8,9-hexahydroquinoline-7,9-dicarboxylic-acid to PQQ. This chain is Pyrroloquinoline-quinone synthase, found in Granulibacter bethesdensis (strain ATCC BAA-1260 / CGDNIH1).